We begin with the raw amino-acid sequence, 100 residues long: Large ribosomal subunit protein bL27 (100 aa).

A propeptide spanning residues 1–13 (MNKLYWLTDLQLF) is cleaved from the precursor. Positions 18–29 (GVDSSKNGRDSN) are enriched in basic and acidic residues. The segment at 18–39 (GVDSSKNGRDSNPKYLGAKLGD) is disordered.

This sequence belongs to the bacterial ribosomal protein bL27 family. In terms of processing, the N-terminus is cleaved by ribosomal processing cysteine protease Prp.

This Ureaplasma urealyticum serovar 10 (strain ATCC 33699 / Western) protein is Large ribosomal subunit protein bL27.